Reading from the N-terminus, the 413-residue chain is Glucose-1-phosphate adenylyltransferase (413 aa).

Residues G163, 179–180 (EK), and S197 contribute to the alpha-D-glucose 1-phosphate site.

This sequence belongs to the bacterial/plant glucose-1-phosphate adenylyltransferase family. As to quaternary structure, homotetramer.

The catalysed reaction is alpha-D-glucose 1-phosphate + ATP + H(+) = ADP-alpha-D-glucose + diphosphate. Its pathway is glycan biosynthesis; glycogen biosynthesis. Functionally, involved in the biosynthesis of ADP-glucose, a building block required for the elongation reactions to produce glycogen. Catalyzes the reaction between ATP and alpha-D-glucose 1-phosphate (G1P) to produce pyrophosphate and ADP-Glc. This Parafrankia sp. (strain EAN1pec) protein is Glucose-1-phosphate adenylyltransferase.